We begin with the raw amino-acid sequence, 165 residues long: Interferon gamma (165 aa).

The signal sequence occupies residues 1–23 (MKYTSYILAFQLCIVLGSLGCYC). At Gln24 the chain carries Pyrrolidone carboxylic acid. N-linked (GlcNAc...) asparagine glycosylation is found at Asn48 and Asn120.

It belongs to the type II (or gamma) interferon family. Homodimer. Interacts with IFNGR1 (via extracellular domain); this interaction promotes IFNGR1 dimerization. Released primarily from activated T lymphocytes.

It is found in the secreted. Functionally, type II interferon produced by immune cells such as T-cells and NK cells that plays crucial roles in antimicrobial, antiviral, and antitumor responses by activating effector immune cells and enhancing antigen presentation. Primarily signals through the JAK-STAT pathway after interaction with its receptor IFNGR1 to affect gene regulation. Upon IFNG binding, IFNGR1 intracellular domain opens out to allow association of downstream signaling components JAK2, JAK1 and STAT1, leading to STAT1 activation, nuclear translocation and transcription of IFNG-regulated genes. Many of the induced genes are transcription factors such as IRF1 that are able to further drive regulation of a next wave of transcription. Plays a role in class I antigen presentation pathway by inducing a replacement of catalytic proteasome subunits with immunoproteasome subunits. In turn, increases the quantity, quality, and repertoire of peptides for class I MHC loading. Increases the efficiency of peptide generation also by inducing the expression of activator PA28 that associates with the proteasome and alters its proteolytic cleavage preference. Up-regulates as well MHC II complexes on the cell surface by promoting expression of several key molecules such as cathepsins B/CTSB, H/CTSH, and L/CTSL. Participates in the regulation of hematopoietic stem cells during development and under homeostatic conditions by affecting their development, quiescence, and differentiation. In Macaca fascicularis (Crab-eating macaque), this protein is Interferon gamma (IFNG).